The sequence spans 43 residues: Peroxidase (43 aa).

This sequence belongs to the peroxidase family. Classical plant (class III) peroxidase subfamily. It depends on Ca(2+) as a cofactor. Heme b serves as cofactor.

The enzyme catalyses 2 a phenolic donor + H2O2 = 2 a phenolic radical donor + 2 H2O. Removal of H(2)O(2), oxidation of toxic reductants, biosynthesis and degradation of lignin, suberization, auxin catabolism, response to environmental stresses such as wounding, pathogen attack and oxidative stress. These functions might be dependent on each isozyme/isoform in each plant tissue. The polypeptide is Peroxidase (Cynara cardunculus var. scolymus (Globe artichoke)).